The chain runs to 402 residues: Ubiquitin-like modifier-activating enzyme 5 (402 aa).

Residues glycine 81, aspartate 102, lysine 125, asparagine 148, and asparagine 182 each contribute to the ATP site. Residues cysteine 224 and cysteine 227 each coordinate Zn(2+). The active-site Glycyl thioester intermediate is the cysteine 248. Residues cysteine 301 and cysteine 306 each coordinate Zn(2+). The tract at residues 369-402 (EAPEKSSETSEETVTTAPPDDASLEDLMAQMKSM) is disordered.

The protein belongs to the ubiquitin-activating E1 family. UBA5 subfamily.

E1-like enzyme which activates UFM1. This chain is Ubiquitin-like modifier-activating enzyme 5, found in Drosophila erecta (Fruit fly).